A 466-amino-acid polypeptide reads, in one-letter code: Hydroxyproline dehydrogenase (466 aa).

Belongs to the proline oxidase family. FAD serves as cofactor.

It carries out the reaction trans-4-hydroxy-L-proline + a quinone = (3R,5S)-1-pyrroline-3-hydroxy-5-carboxylate + a quinol + H(+). The catalysed reaction is L-proline + a quinone = (S)-1-pyrroline-5-carboxylate + a quinol + H(+). It functions in the pathway amino-acid degradation; L-proline degradation into L-glutamate; L-glutamate from L-proline: step 1/2. Its function is as follows. Dehydrogenase that converts trans-4-L-hydroxyproline to delta-1-pyrroline-3-hydroxy-5-carboxylate (Hyp) using a quinone as the terminal electron acceptor. Can also use proline as a substrate but with a very much lower efficiency. Does not react with other diastereomers of Hyp: trans-4-D-hydroxyproline and cis-4-L-hydroxyproline. This is Hydroxyproline dehydrogenase (prodh2) from Xenopus laevis (African clawed frog).